The primary structure comprises 269 residues: Small ribosomal subunit protein uS2 (269 aa).

The interval 224-269 (ANQGREDSEDVYSETENDTEETDEELVSEEDLKEFVENSEEESDEE) is disordered. Acidic residues predominate over residues 230-269 (DSEDVYSETENDTEETDEELVSEEDLKEFVENSEEESDEE).

This sequence belongs to the universal ribosomal protein uS2 family.

This is Small ribosomal subunit protein uS2 from Finegoldia magna (strain ATCC 29328 / DSM 20472 / WAL 2508) (Peptostreptococcus magnus).